The sequence spans 405 residues: L-rhamnonate dehydratase (405 aa).

Substrate is bound by residues His33 and Arg59. Positions 226, 252, and 280 each coordinate Mg(2+). Catalysis depends on His329, which acts as the Proton acceptor. Residue Glu349 participates in substrate binding.

It belongs to the mandelate racemase/muconate lactonizing enzyme family. RhamD subfamily. Homooctamer; tetramer of dimers. The cofactor is Mg(2+).

The catalysed reaction is L-rhamnonate = 2-dehydro-3-deoxy-L-rhamnonate + H2O. Functionally, catalyzes the dehydration of L-rhamnonate to 2-keto-3-deoxy-L-rhamnonate (KDR). This chain is L-rhamnonate dehydratase, found in Escherichia coli (strain K12 / DH10B).